The following is a 166-amino-acid chain: Probable chemoreceptor glutamine deamidase CheD (166 aa).

The protein belongs to the CheD family.

It carries out the reaction L-glutaminyl-[protein] + H2O = L-glutamyl-[protein] + NH4(+). Functionally, probably deamidates glutamine residues to glutamate on methyl-accepting chemotaxis receptors (MCPs), playing an important role in chemotaxis. This Clostridium acetobutylicum (strain ATCC 824 / DSM 792 / JCM 1419 / IAM 19013 / LMG 5710 / NBRC 13948 / NRRL B-527 / VKM B-1787 / 2291 / W) protein is Probable chemoreceptor glutamine deamidase CheD.